Consider the following 394-residue polypeptide: MSRELHDVDLAEVKPLVEKGESITGLLQEFDVQEQDIETLHGSLHVTLCGTPKGNRPVILTYHDIGMNHKTCYNPLFNSEDMQEITQHFAVCHVDAPGQQDGAPSFPVGYMYPSMDQLAEMLPGVLHKFGLKSVIGMGTGAGAYILTRFALNNPEMVEGLVLMNVNPCAEGWMDWAASKISGWTQALPDMVVSHLFGKEEIHSNVEVVHTYRQHILNDMNPSNLHLFISAYNSRRDLEIERPMPGTHTVTLQCPALLVVGDNSPAVDAVVECNSKLDPTKTTLLKMADCGGLPQISQPAKLAEAFKYFVQGMGYMPSASMTRLMRSRTASGSSVTSLEGTRSRSHTSEGPRSRSHTSEGSRSRSHTSEDARLNITPSSGATGNNAGPKSMEVSC.

Serine 2 is modified (N-acetylserine). Serine 2, serine 319, and serine 326 each carry phosphoserine. The tract at residues 325–394 (RSRTASGSSV…AGPKSMEVSC (70 aa)) is disordered. Residues 327-339 (RTASGSSVTSLEG) show a composition bias toward polar residues. Position 328 is a phosphothreonine (threonine 328). Serine 330 bears the Phosphoserine mark. Phosphoserine; by SGK1 is present on serine 332. At serine 333 the chain carries Phosphoserine. Threonine 335 is modified (phosphothreonine). Residue serine 336 is modified to Phosphoserine. 3 repeat units span residues 339–348 (GTRSRSHTSE), 349–358 (GPRSRSHTSE), and 359–368 (GSRSRSHTSE). The tract at residues 339-368 (GTRSRSHTSEGPRSRSHTSEGSRSRSHTSE) is 3 X 10 AA tandem repeats of G-[PST]-R-S-R-S-H-T-S-E. The residue at position 340 (threonine 340) is a Phosphothreonine. Serine 342 bears the Phosphoserine mark. Residues 345–371 (HTSEGPRSRSHTSEGSRSRSHTSEDAR) show a composition bias toward basic and acidic residues. Position 346 is a phosphothreonine (threonine 346). A Phosphoserine modification is found at serine 352. The residue at position 356 (threonine 356) is a Phosphothreonine; by SGK1. Phosphoserine is present on residues serine 362 and serine 364. 2 positions are modified to phosphothreonine: threonine 366 and threonine 375. Positions 374 to 386 (ITPSSGATGNNAG) are enriched in polar residues.

Belongs to the NDRG family. Interacts with RAB4A (membrane-bound form); the interaction involves NDRG1 in vesicular recycling of CDH1. Interacts with APOA1, APOA2, PRA1 and RTN1. In terms of processing, under stress conditions, phosphorylated in the C-terminal on many serine and threonine residues. Phosphorylated in vitro by PKA. Phosphorylation enhanced by increased intracellular cAMP levels. Homocysteine induces dephosphorylation. Phosphorylation by SGK1 is cell cycle dependent.

The protein localises to the cytoplasm. It is found in the cytosol. The protein resides in the cytoskeleton. It localises to the microtubule organizing center. Its subcellular location is the centrosome. The protein localises to the nucleus. It is found in the cell membrane. Its function is as follows. Stress-responsive protein involved in hormone responses, cell growth, and differentiation. Acts as a tumor suppressor in many cell types. Necessary but not sufficient for p53/TP53-mediated caspase activation and apoptosis. Has a role in cell trafficking notably of the Schwann cell and is necessary for the maintenance and development of the peripheral nerve myelin sheath. Required for vesicular recycling of CDH1 and TF. May also function in lipid trafficking. Protects cells from spindle disruption damage. Functions in p53/TP53-dependent mitotic spindle checkpoint. Regulates microtubule dynamics and maintains euploidy. The chain is Protein NDRG1 (Ndrg1) from Rattus norvegicus (Rat).